Consider the following 312-residue polypeptide: Ribosomal RNA small subunit methyltransferase H (312 aa).

Residues 32-34 (AGH), Asp-52, Phe-79, Asp-100, and Gln-107 each bind S-adenosyl-L-methionine.

Belongs to the methyltransferase superfamily. RsmH family.

It is found in the cytoplasm. The catalysed reaction is cytidine(1402) in 16S rRNA + S-adenosyl-L-methionine = N(4)-methylcytidine(1402) in 16S rRNA + S-adenosyl-L-homocysteine + H(+). Functionally, specifically methylates the N4 position of cytidine in position 1402 (C1402) of 16S rRNA. The protein is Ribosomal RNA small subunit methyltransferase H of Listeria monocytogenes serotype 4b (strain CLIP80459).